A 229-amino-acid chain; its full sequence is PKHD-type hydroxylase Nham_1514 (229 aa).

The 103-residue stretch at 78-180 (QIFPPLFNRY…RVASFFWLQS (103 aa)) folds into the Fe2OG dioxygenase domain. Fe cation is bound by residues His-98, Asp-100, and His-161. Arg-171 serves as a coordination point for 2-oxoglutarate.

Fe(2+) is required as a cofactor. Requires L-ascorbate as cofactor.

In Nitrobacter hamburgensis (strain DSM 10229 / NCIMB 13809 / X14), this protein is PKHD-type hydroxylase Nham_1514.